Here is an 890-residue protein sequence, read N- to C-terminus: Translation initiation factor IF-2 (890 aa).

The tract at residues 45-304 is disordered; sequence LIDHLNQKNS…LQQGFQKPAQ (260 aa). Polar residues predominate over residues 67 to 81; that stretch reads STLNIPGTGGKSKSV. The segment covering 92–217 has biased composition (basic and acidic residues); sequence VKRDPQEAER…RMAEENKWID (126 aa). The span at 252–266 shows a compositional bias: basic residues; the sequence is GRGRNAKAARPKKGN. The segment covering 267-280 has biased composition (basic and acidic residues); sequence KHAESKADREEARA. Positions 389–558 constitute a tr-type G domain; it reads PRAPVVTIMG…LLQAEVLELK (170 aa). The segment at 398–405 is G1; sequence GHVDHGKT. 398 to 405 is a GTP binding site; it reads GHVDHGKT. The interval 423 to 427 is G2; the sequence is GITQH. Residues 444–447 form a G3 region; it reads DTPG. GTP-binding positions include 444–448 and 498–501; these read DTPGH and NKID. A G4 region spans residues 498-501; the sequence is NKID. A G5 region spans residues 534 to 536; sequence SAK. The residue at position 808 (Lys808) is an N6-acetyllysine.

The protein belongs to the TRAFAC class translation factor GTPase superfamily. Classic translation factor GTPase family. IF-2 subfamily.

It is found in the cytoplasm. One of the essential components for the initiation of protein synthesis. Protects formylmethionyl-tRNA from spontaneous hydrolysis and promotes its binding to the 30S ribosomal subunits. Also involved in the hydrolysis of GTP during the formation of the 70S ribosomal complex. The polypeptide is Translation initiation factor IF-2 (Escherichia coli O81 (strain ED1a)).